Consider the following 559-residue polypeptide: BTB/POZ domain-containing protein At5g47800 (559 aa).

The BTB domain occupies 28-96; it reads NDLVIRINNT…CYDITINLSA (69 aa). The NPH3 domain maps to 199–476; it reads DWWTEDISDL…VQALFFDQES (278 aa). A Phosphotyrosine modification is found at Tyr417. Residues 477 to 489 show a composition bias toward low complexity; the sequence is GSKGASSRSESQE. Disordered stretches follow at residues 477-502 and 524-559; these read GSKG…TDEH and EGCK…SRDR. Composition is skewed to basic and acidic residues over residues 492-502 and 524-541; these read TRGKETPTDEH and EGCK…DPKK.

Belongs to the NPH3 family.

Its pathway is protein modification; protein ubiquitination. In terms of biological role, may act as a substrate-specific adapter of an E3 ubiquitin-protein ligase complex (CUL3-RBX1-BTB) which mediates the ubiquitination and subsequent proteasomal degradation of target proteins. This Arabidopsis thaliana (Mouse-ear cress) protein is BTB/POZ domain-containing protein At5g47800.